The chain runs to 85 residues: Large ribosomal subunit protein bL27 (85 aa).

The disordered stretch occupies residues 1 to 21; the sequence is MAHKKAGGSTRNGRDSNAQRL. Positions 9–19 are enriched in polar residues; sequence STRNGRDSNAQ.

Belongs to the bacterial ribosomal protein bL27 family.

In Pectobacterium atrosepticum (strain SCRI 1043 / ATCC BAA-672) (Erwinia carotovora subsp. atroseptica), this protein is Large ribosomal subunit protein bL27.